Consider the following 622-residue polypeptide: Chaperone protein HscA homolog (622 aa).

This sequence belongs to the heat shock protein 70 family.

Functionally, chaperone involved in the maturation of iron-sulfur cluster-containing proteins. Has a low intrinsic ATPase activity which is markedly stimulated by HscB. The polypeptide is Chaperone protein HscA homolog (Burkholderia mallei (strain NCTC 10247)).